Reading from the N-terminus, the 151-residue chain is Putative pre-16S rRNA nuclease (151 aa).

Belongs to the YqgF nuclease family.

It is found in the cytoplasm. Functionally, could be a nuclease involved in processing of the 5'-end of pre-16S rRNA. This is Putative pre-16S rRNA nuclease from Bifidobacterium longum subsp. infantis (strain ATCC 15697 / DSM 20088 / JCM 1222 / NCTC 11817 / S12).